A 173-amino-acid chain; its full sequence is N-alpha-acetyltransferase 20 (173 aa).

The region spanning 2 to 151 is the N-acetyltransferase domain; sequence TTIRRFVCDD…DALDMRKALP (150 aa).

Belongs to the acetyltransferase family. ARD1 subfamily.

Functionally, seems to be involved in N-acetylation. This Dictyostelium discoideum (Social amoeba) protein is N-alpha-acetyltransferase 20 (nat5).